A 229-amino-acid chain; its full sequence is Heptaprenylglyceryl phosphate synthase (229 aa).

K12 contributes to the sn-glycerol 1-phosphate binding site. 2 residues coordinate Mg(2+): D14 and S40. Residues 159–164 (YLEYSG), G189, and 209–210 (GN) each bind sn-glycerol 1-phosphate.

It belongs to the GGGP/HepGP synthase family. Group I subfamily. In terms of assembly, homodimer. Mg(2+) is required as a cofactor.

The catalysed reaction is sn-glycerol 1-phosphate + all-trans-heptaprenyl diphosphate = 3-heptaprenyl-sn-glycero-1-phosphate + diphosphate. It functions in the pathway membrane lipid metabolism; glycerophospholipid metabolism. Prenyltransferase that catalyzes in vivo the transfer of the heptaprenyl moiety of heptaprenyl pyrophosphate (HepPP; 35 carbon atoms) to the C3 hydroxyl of sn-glycerol-1-phosphate (G1P), producing heptaprenylglyceryl phosphate (HepGP). This reaction is an ether-bond-formation step in the biosynthesis of archaea-type G1P-based membrane lipids found in Bacillales. This chain is Heptaprenylglyceryl phosphate synthase, found in Bacillus cereus (strain ATCC 10987 / NRS 248).